The chain runs to 1191 residues: DNA-directed RNA polymerase subunit beta (1191 aa).

Positions 1164–1191 (EEEDLQPADALNIAPQPDTEEEPVESFE) are disordered. Acidic residues predominate over residues 1181-1191 (DTEEEPVESFE).

It belongs to the RNA polymerase beta chain family. In terms of assembly, the RNAP catalytic core consists of 2 alpha, 1 beta, 1 beta' and 1 omega subunit. When a sigma factor is associated with the core the holoenzyme is formed, which can initiate transcription.

It catalyses the reaction RNA(n) + a ribonucleoside 5'-triphosphate = RNA(n+1) + diphosphate. In terms of biological role, DNA-dependent RNA polymerase catalyzes the transcription of DNA into RNA using the four ribonucleoside triphosphates as substrates. This is DNA-directed RNA polymerase subunit beta from Lysinibacillus sphaericus (strain C3-41).